A 313-amino-acid chain; its full sequence is MTQWYPVSPTLWQGRDDSAEAADARRLFQTVIRSEDFAPQDWPKQIALMGFACDEGVKRNAGRPGAAGAPDALRKALANMASHNGHERLVDLGNWVAQAPDLEGAQQTLRDAVRRCLCAGMRTLVLGGGHETAFGHGAGVLDAFAQESVGIINLDAHLDLRQTERATSGTPFRQLAQLCDAQRRVFHYACFGVSRAANTRALWREATRRNVTVVEDLDCYNALAQMTQFIARVDKIYLTIDLDVLPVWEMPAVSAPAALGVPLIQILRLIEPVCRSGKLQAADLVEFNPRFDKDGAAARVAARLGWQIAHWWR.

Residues histidine 130, aspartate 155, histidine 157, aspartate 159, aspartate 241, and aspartate 243 each contribute to the Mn(2+) site.

It belongs to the arginase family. Mn(2+) serves as cofactor.

It carries out the reaction N-formimidoyl-L-glutamate + H2O = formamide + L-glutamate. It functions in the pathway amino-acid degradation; L-histidine degradation into L-glutamate; L-glutamate from N-formimidoyl-L-glutamate (hydrolase route): step 1/1. Functionally, catalyzes the conversion of N-formimidoyl-L-glutamate to L-glutamate and formamide. The polypeptide is Formimidoylglutamase (Salmonella arizonae (strain ATCC BAA-731 / CDC346-86 / RSK2980)).